A 470-amino-acid chain; its full sequence is Uronate isomerase (470 aa).

Belongs to the metallo-dependent hydrolases superfamily. Uronate isomerase family.

The enzyme catalyses D-glucuronate = D-fructuronate. The catalysed reaction is aldehydo-D-galacturonate = keto-D-tagaturonate. It participates in carbohydrate metabolism; pentose and glucuronate interconversion. This Cronobacter sakazakii (strain ATCC BAA-894) (Enterobacter sakazakii) protein is Uronate isomerase.